Here is a 465-residue protein sequence, read N- to C-terminus: Ras GTPase-activating protein-binding protein 1 (465 aa).

Positions 11-133 (VGREFVRQYY…FYVHNDIFRY (123 aa)) constitute an NTF2 domain. Residues Lys36, Lys50, Lys59, Lys64, Lys76, and Lys123 each participate in a glycyl lysine isopeptide (Lys-Gly) (interchain with G-Cter in ubiquitin) cross-link. The acidic disordered region stretch occupies residues 142 to 224 (VTEPQEESEE…EAALEEAAPD (83 aa)). Residue Thr143 is modified to Phosphothreonine. Positions 144 to 330 (EPQEESEEEV…GEPGDVEPRR (187 aa)) are disordered. 2 stretches are compositionally biased toward acidic residues: residues 145–157 (PQEE…EEPE) and 184–205 (EHLE…EPEP). Phosphoserine is present on Ser149. 3 positions are modified to phosphoserine: Ser231, Ser248, and Ser251. Positions 248 to 257 (SWASVTSKNL) are enriched in polar residues. Composition is skewed to basic and acidic residues over residues 295–305 (PQRDQRVREQR) and 316–330 (PIRE…EPRR). The RRM domain maps to 338 to 413 (HQLFIGNLPH…VRLNVEEKKT (76 aa)). Glycyl lysine isopeptide (Lys-Gly) (interchain with G-Cter in ubiquitin) cross-links involve residues Lys351 and Lys355. Ser371 carries the post-translational modification Phosphoserine. Lys374 participates in a covalent cross-link: Glycyl lysine isopeptide (Lys-Gly) (interchain with G-Cter in ubiquitin). Residue Lys374 is modified to N6-acetyllysine; alternate. A Glycyl lysine isopeptide (Lys-Gly) (interchain with G-Cter in SUMO2); alternate cross-link involves residue Lys374. Lys391 participates in a covalent cross-link: Glycyl lysine isopeptide (Lys-Gly) (interchain with G-Cter in ubiquitin); alternate. Positions 408–464 (VEEKKTRAAREGDRRDNRLRGPGGPRGGPSGGMRGPPRGGMVQKPGFGVGRGITTPR) are RG-rich region. Positions 411 to 426 (KKTRAAREGDRRDNRL) are enriched in basic and acidic residues. The disordered stretch occupies residues 411-465 (KKTRAAREGDRRDNRLRGPGGPRGGPSGGMRGPPRGGMVQKPGFGVGRGITTPRQ). The residue at position 427 (Arg427) is an Asymmetric dimethylarginine. Over residues 428 to 445 (GPGGPRGGPSGGMRGPPR) the composition is skewed to gly residues. Residue Arg433 is modified to Asymmetric dimethylarginine; alternate. 4 positions are modified to omega-N-methylarginine; alternate: Arg433, Arg445, Arg458, and Arg464. Dimethylated arginine; alternate is present on Arg458.

As to quaternary structure, homodimer and oligomer. Component of a TAU mRNP complex, at least composed of IGF2BP1, ELAVL4 and G3BP1. Binds to the SH3 domain of Ras GTPase-activating protein (RASA1) in proliferating cells. No interaction in quiescent cells. Interacts (via NTF2 domain) with USP10; inhibiting stress granule formation by lowering G3BP1 valence. Interacts (via NTF2 domain) with CAPRIN1; promoting stress granule formation by lowering the saturation-concentration of G3BP1. Interacts (via NTF2 domain) with UBAP2L; promoting stress granule formation. Associates (via RG-rich region) with 40S ribosome subunits. Interacts with RPTOR and SPAG5; this complex is increased by oxidative stress. Interacts with ATXN2L. Interacts with STYXL1. Interacts with CGAS (via N-terminus); this interaction promotes the DNA-binding and activation of CGAS. Interacts (via C-terminus) with RIGI. Interacts with PABPC1. Interacts with QKI (isoforms QKI6 and QKI7); directing N(7)-methylguanine-containing mRNAs to stress granules. Mg(2+) is required as a cofactor. Phosphorylation of the acidic disordered region regulates stress granule assembly. RASA1-dependent phosphorylation of Ser-149 induces a conformational change that prevents self-association. Dephosphorylation after HRAS activation is required for stress granule assembly. Ser-149 phosphorylation induces partial nuclear localization. Post-translationally, arg-435 is dimethylated, probably to asymmetric dimethylarginine. In terms of processing, ubiquitinated by TRIM21 via 'Lys-63'-linked polyubiquitination in the NTF2 domain in response to heat shock, leading to stress granule disassembly: ubiquitination promotes interaction with the FAF2 adapter, followed by interaction with VCP, which extracts G3BP1 from stress granules, leading to stress granule disassembly. In case of prolonged stress, ubiquitination by TRIM21 leads to autophagy-dependent degradation of G3BP1 via recruitment of ubiquitinated G3BP1 by SQSTM1 and/or CALCOCO2 to autophagosomes. Ubiquitous.

The protein resides in the cytoplasm. Its subcellular location is the cytosol. It localises to the perikaryon. It is found in the stress granule. The protein localises to the nucleus. The enzyme catalyses ATP + H2O = ADP + phosphate + H(+). Under physiological conditions, G3BP1 adopts a compact state that is stabilized by intramolecular interactions between the RG-rich and the acidic regions that inhibit phase separation. Upon stress, polysomes disassemble and mRNAs are released in an unfolded protein-free state. Binding of unfolded mRNA to G3BP1 outcompetes the intramolecular interactions and RNA-bound G3BP1 adopts an expanded conformation in which the RG-rich region becomes exposed to engage in protein-protein and protein-RNA interactions, allowing physical cross-linking of RNA molecules to form protein-RNA condensates, leading to liquid-liquid phase separation (LLPS). Functionally, protein involved in various processes, such as stress granule formation and innate immunity. Plays an essential role in stress granule formation. Stress granules are membraneless compartments that store mRNAs and proteins, such as stalled translation pre-initiation complexes, in response to stress. Promotes formation of stress granules phase-separated membraneless compartment by undergoing liquid-liquid phase separation (LLPS) upon unfolded RNA-binding: functions as a molecular switch that triggers RNA-dependent LLPS in response to a rise in intracellular free RNA concentrations. Also acts as an ATP- and magnesium-dependent helicase: unwinds DNA/DNA, RNA/DNA, and RNA/RNA substrates with comparable efficiency. Acts unidirectionally by moving in the 5' to 3' direction along the bound single-stranded DNA. Unwinds preferentially partial DNA and RNA duplexes having a 17 bp annealed portion and either a hanging 3' tail or hanging tails at both 5'- and 3'-ends. Plays an essential role in innate immunity by promoting CGAS and RIGI activity. Participates in the DNA-triggered cGAS/STING pathway by promoting the DNA binding and activation of CGAS. Triggers the condensation of cGAS, a process probably linked to the formation of membrane-less organelles. Also enhances RIGI-induced type I interferon production probably by helping RIGI at sensing pathogenic RNA. May also act as a phosphorylation-dependent sequence-specific endoribonuclease in vitro: Cleaves exclusively between cytosine and adenine and cleaves MYC mRNA preferentially at the 3'-UTR. This is Ras GTPase-activating protein-binding protein 1 (G3bp1) from Mus musculus (Mouse).